The primary structure comprises 2050 residues: Unconventional myosin-XVIIIa (2050 aa).

Basic and acidic residues-rich tracts occupy residues 1–17 and 23–34; these read MFNL…GRKE and EKKERMSAAELR. The segment at 1–34 is disordered; the sequence is MFNLMKKDKDKDGGRKEKKEKKEKKERMSAAELR. The interval 1–398 is mediates nucleotide-independent binding to F-actin and interaction with GOLPH3; the sequence is MFNLMKKDKD…LDVDEDDIEK (398 aa). Residues S35, S52, S72, and S74 each carry the phosphoserine modification. T79 is subject to Phosphothreonine. S83 and S98 each carry phosphoserine. T99 is subject to Phosphothreonine. Phosphoserine is present on residues S102 and S103. The Interaction with actin motif lies at 114–118; it reads RGSVL. Phosphoserine occurs at positions 140, 145, 157, 160, 164, 234, and 340. Residues 140–167 are disordered; sequence SFSQRSRDESASETSTPSEHSAAPSPQV. The region spanning 220 to 311 is the PDZ domain; it reads ELELQRRPTG…SVRLKVQPIP (92 aa). The 53-residue stretch at 349–401 folds into the Myosin N-terminal SH3-like domain; it reads TEKVWLVHRDGFSLASQLKSEELSLPEGKARVKLDHDGAILDVDEDDIEKANA. The 777-residue stretch at 405-1181 folds into the Myosin motor domain; it reads DRLEDLASLV…TLARLEEQRD (777 aa). Position 498-505 (498-505) interacts with ATP; the sequence is GSSGSGKT. Phosphoserine occurs at positions 983, 1063, 1064, and 1066. The segment at 1051–1071 is disordered; it reads PGEPRSASSRRVSSSSELDLP. The span at 1055–1066 shows a compositional bias: low complexity; that stretch reads RSASSRRVSSSS. The IQ domain occupies 1184–1213; that stretch reads TSRHLTLFQAACRGYLARQHFKKRKIQDLA. Residues 1242–1967 adopt a coiled-coil conformation; it reads LIQVQLSEEQ…KKNKLEGDSD (726 aa). Positions 1448-1477 are disordered; the sequence is RNHELEKKQRRFDSELSQAHEETQREKLQR. S1636 is modified (phosphoserine). Residues 1848-1897 are disordered; sequence MEKLTEERDQRAAAENREKEQNKRLQRQLRDTKEEMSELARKEAEASRKK. 11 positions are modified to phosphoserine: S1938, S1966, S1970, S1994, S1998, S2002, S2003, S2016, S2032, S2037, and S2039. A disordered region spans residues 1955 to 2050; the sequence is YQKKKNKLEG…TEAKLTETSA (96 aa). The residue at position 2041 (T2041) is a Phosphothreonine. Over residues 2041 to 2050 the composition is skewed to basic and acidic residues; the sequence is TEAKLTETSA.

This sequence belongs to the TRAFAC class myosin-kinesin ATPase superfamily. Myosin family. As to quaternary structure, homodimer. Forms a tripartite complex with CDC42BPA/CDC42BPB and LURAP1 with the latter acting as an adapter connecting CDC42BPA/CDC42BPB and MYO18A. Binds F-actin; regulated by ADP and GOLPH3. Interacts with GOLPH3; the interaction is direct and may link Golgi membranes to the actin cytoskeleton. Interacts with JAK3. Interacts with MSR1 and CD14. Post-translationally, phosphorylated on tyrosine upon CSF1R activation. Isoform 6 is phosphorylated on Ser-340. In terms of tissue distribution, isoform 1; Expressed ubiquitously. Isoform 2: Specifically expressed in most hematopoietic cells. Isoform 3: Predominantly expressed in alveolar macrophages.

It is found in the golgi apparatus. The protein localises to the trans-Golgi network. It localises to the golgi outpost. Its subcellular location is the cytoplasm. The protein resides in the cytoskeleton. It is found in the microtubule organizing center. The protein localises to the endoplasmic reticulum-Golgi intermediate compartment. May link Golgi membranes to the cytoskeleton and participate in the tensile force required for vesicle budding from the Golgi. Thereby, may play a role in Golgi membrane trafficking and could indirectly give its flattened shape to the Golgi apparatus. Alternatively, in concert with LURAP1 and CDC42BPA/CDC42BPB, has been involved in modulating lamellar actomyosin retrograde flow that is crucial to cell protrusion and migration. May be involved in the maintenance of the stromal cell architectures required for cell to cell contact. Regulates trafficking, expression, and activation of innate immune receptors on macrophages. Plays a role to suppress inflammatory responsiveness of macrophages via a mechanism that modulates CD14 trafficking. Acts as a receptor of surfactant-associated protein A (SFTPA1/SP-A) and plays an important role in internalization and clearance of SFTPA1-opsonized S.aureus by alveolar macrophages. Strongly enhances natural killer cell cytotoxicity. This is Unconventional myosin-XVIIIa (Myo18a) from Mus musculus (Mouse).